The primary structure comprises 278 residues: MFPLSGCWRTELLLLLLLAVAVRESWQIEEKSCDLVGEKDKESKNEVALLERLRPLFNKSFESTVGQGSDTYSYIFRVCREAGNHSSGAGLVQINKSNEKETVVGRINETHIFNGSNWIMLIYKGGDEYDNHCGKEQRRAVVMISCNRHTLAGNFNPVSEERGKIQDCFYLFEMDSSLACSPEVSHLSVGSILLVIFASLVAVYIIGGFLYQRLVVGAKGMEQFPHLAFWQDLGNLVADGCDFVCRSKPRSVPAAYRGVGDDQLGEESEERDDHLLPM.

The signal sequence occupies residues 1–21 (MFPLSGCWRTELLLLLLLAVA). The Lumenal portion of the chain corresponds to 22–188 (VRESWQIEEK…ACSPEVSHLS (167 aa)). In terms of domain architecture, MRH spans 31-182 (KSCDLVGEKD…EMDSSLACSP (152 aa)). An intrachain disulfide couples C33 to C79. N58, N84, N95, N108, and N114 each carry an N-linked (GlcNAc...) asparagine glycan. Disulfide bonds link C133/C168 and C146/C180. A helical membrane pass occupies residues 189–209 (VGSILLVIFASLVAVYIIGGF). Residues 210 to 278 (LYQRLVVGAK…EERDDHLLPM (69 aa)) lie on the Cytoplasmic side of the membrane. A disordered region spans residues 256-278 (YRGVGDDQLGEESEERDDHLLPM). S268 carries the post-translational modification Phosphoserine.

In terms of assembly, homodimer. Binds GGA1, GGA2 and GGA3.

Its subcellular location is the lysosome membrane. In terms of biological role, transport of phosphorylated lysosomal enzymes from the Golgi complex and the cell surface to lysosomes. Lysosomal enzymes bearing phosphomannosyl residues bind specifically to mannose-6-phosphate receptors in the Golgi apparatus and the resulting receptor-ligand complex is transported to an acidic prelyosomal compartment where the low pH mediates the dissociation of the complex. The sequence is that of Cation-dependent mannose-6-phosphate receptor (M6pr) from Rattus norvegicus (Rat).